The primary structure comprises 463 residues: ATP synthase subunit beta (463 aa).

Residue glycine 152–threonine 159 coordinates ATP.

It belongs to the ATPase alpha/beta chains family. In terms of assembly, F-type ATPases have 2 components, CF(1) - the catalytic core - and CF(0) - the membrane proton channel. CF(1) has five subunits: alpha(3), beta(3), gamma(1), delta(1), epsilon(1). CF(0) has three main subunits: a(1), b(2) and c(9-12). The alpha and beta chains form an alternating ring which encloses part of the gamma chain. CF(1) is attached to CF(0) by a central stalk formed by the gamma and epsilon chains, while a peripheral stalk is formed by the delta and b chains.

It localises to the cell inner membrane. The enzyme catalyses ATP + H2O + 4 H(+)(in) = ADP + phosphate + 5 H(+)(out). In terms of biological role, produces ATP from ADP in the presence of a proton gradient across the membrane. The catalytic sites are hosted primarily by the beta subunits. The chain is ATP synthase subunit beta from Shewanella baltica (strain OS223).